The primary structure comprises 317 residues: MSSEQKSQHCKPEEGVEAQEEALGLVGAQAPTTEEQEAAVSSSSPLVPGTLEEVPAAESAGPPQSPQGASALPTTISFTCWRQPNEGSSSQEEEGPSTSPDAESLFREALSNKVDELAHFLLRKYRAKELVTKAEMLERVIKNYKRCFPVIFGKASESLKMIFGIDVKEVDPASNTYTLVTCLGLSYDGLLGNNQIFPKTGLLIIVLGTIAMEGDSASEEEIWEELGVMGVYDGREHTVYGEPRKLLTQDWVQENYLEYRQVPGSNPARYEFLWGPRALAETSYVKVLEHVVRVNARVRIAYPSLREAALLEEEEGV.

Over residues 1 to 14 the composition is skewed to basic and acidic residues; sequence MSSEQKSQHCKPEE. The interval 1–102 is disordered; it reads MSSEQKSQHC…EEGPSTSPDA (102 aa). Positions 66–82 are enriched in polar residues; that stretch reads PQGASALPTTISFTCWR. Positions 110-309 constitute an MAGE domain; that stretch reads LSNKVDELAH…IAYPSLREAA (200 aa).

Expressed in many tumors of several types, such as melanoma, head and neck squamous cell carcinoma, lung carcinoma and breast carcinoma, but not in normal tissues except for testes and placenta.

In terms of biological role, regulates cell proliferation through the inhibition of cell cycle arrest at the G1 phase. Also negatively regulates p53-mediated apoptosis. This Homo sapiens (Human) protein is Melanoma-associated antigen 4 (MAGEA4).